Reading from the N-terminus, the 316-residue chain is IDS-like terpene synthase 2 (316 aa).

Positions 69 and 73 each coordinate Mg(2+).

It belongs to the FPP/GGPP synthase family. The cofactor is Mg(2+).

It catalyses the reaction (2E)-geranyl diphosphate + H2O = linalool + diphosphate. The enzyme catalyses (2E,6E)-farnesyl diphosphate + H2O = (6E)-nerolidol + diphosphate. Its function is as follows. Terpene synthase that shows monoterpene synthase activity and produces linalool, using geranyl diphosphate (GPP) as substrate. Also shows sesquiterpene synthase activity as it is able to convert farnesyl diphosphate (FPP) into (E)-nerolidol. This is IDS-like terpene synthase 2 from Melampsora larici-populina (strain 98AG31 / pathotype 3-4-7) (Poplar leaf rust fungus).